A 201-amino-acid chain; its full sequence is Phosphoprotein (201 aa).

The tract at residues 1-70 (MATRPSSLVD…DQRTGREQLS (70 aa)) is disordered. Short sequence motifs (nuclear localization signal) lie at residues 29–36 (PRPRKIPR) and 181–193 (PPRI…SAPT).

In terms of assembly, homomultimer; only active in its oligomeric state. Interacts with nucleoprotein/N. Interacts with matrix/M protein. Interacts with host TBK1. Interacts with polymerase L. Interacts with host HMGB1; this interaction is required to stabilize RNP on chromosomes. Post-translationally, phosphorylated by host PKC epsilon and casein kinase II.

The protein resides in the host nucleus. It is found in the host cytoplasm. In terms of biological role, essential component of the RNA polymerase transcription and replication complex. Acts as a scaffold which brings L in close proximity to the N-RNA complex. Plays a role in the segregation of the viral genome in host daughter cells during mitosis by interacting with host HMGB1, a host chromatin-remodeling DNA architectural protein, thereby stabilizing RNP on chromosomes. Interacts with host TBK1 and thus interferes with activation of cellular antiviral state. Inhibits cellular histone acetyltransferase activities. The chain is Phosphoprotein (P/X) from Bos taurus (Bovine).